A 178-amino-acid polypeptide reads, in one-letter code: uncharacterized protein (178 aa).

A signal peptide spans 1-19 (MKKNIHILGASGVGTSTLG).

This is an uncharacterized protein from Bacillus subtilis (strain 168).